Consider the following 371-residue polypeptide: Aminomethyltransferase (371 aa).

It belongs to the GcvT family. In terms of assembly, the glycine cleavage system is composed of four proteins: P, T, L and H.

The enzyme catalyses N(6)-[(R)-S(8)-aminomethyldihydrolipoyl]-L-lysyl-[protein] + (6S)-5,6,7,8-tetrahydrofolate = N(6)-[(R)-dihydrolipoyl]-L-lysyl-[protein] + (6R)-5,10-methylene-5,6,7,8-tetrahydrofolate + NH4(+). The glycine cleavage system catalyzes the degradation of glycine. The polypeptide is Aminomethyltransferase (Leptospira borgpetersenii serovar Hardjo-bovis (strain JB197)).